The chain runs to 237 residues: Proteasome subunit alpha (237 aa).

Belongs to the peptidase T1A family. In terms of assembly, the 20S proteasome core is composed of 14 alpha and 14 beta subunits that assemble into four stacked heptameric rings, resulting in a barrel-shaped structure. The two inner rings, each composed of seven catalytic beta subunits, are sandwiched by two outer rings, each composed of seven alpha subunits. The catalytic chamber with the active sites is on the inside of the barrel. Has a gated structure, the ends of the cylinder being occluded by the N-termini of the alpha-subunits. Is capped by the proteasome-associated ATPase, ARC.

The protein resides in the cytoplasm. Its pathway is protein degradation; proteasomal Pup-dependent pathway. Its activity is regulated as follows. The formation of the proteasomal ATPase ARC-20S proteasome complex, likely via the docking of the C-termini of ARC into the intersubunit pockets in the alpha-rings, may trigger opening of the gate for substrate entry. Interconversion between the open-gate and close-gate conformations leads to a dynamic regulation of the 20S proteasome proteolysis activity. Functionally, component of the proteasome core, a large protease complex with broad specificity involved in protein degradation. The polypeptide is Proteasome subunit alpha (Kineococcus radiotolerans (strain ATCC BAA-149 / DSM 14245 / SRS30216)).